The following is a 218-amino-acid chain: NAD(P)H-quinone oxidoreductase subunit I (218 aa).

2 4Fe-4S ferredoxin-type domains span residues 55–84 and 95–124; these read GRIH…VDWV and RNYS…MTEE. C64, C67, C70, C74, C104, C107, C110, and C114 together coordinate [4Fe-4S] cluster. A disordered region spans residues 179 to 218; sequence LRAGKLPSQIIKELQADKSEEEGKNNSSDMVPNKLNSTNK. Basic and acidic residues predominate over residues 192 to 202; that stretch reads LQADKSEEEGK. The span at 203–218 shows a compositional bias: polar residues; it reads NNSSDMVPNKLNSTNK.

The protein belongs to the complex I 23 kDa subunit family. In terms of assembly, NDH-1 is composed of at least 11 different subunits. [4Fe-4S] cluster is required as a cofactor.

It is found in the cellular thylakoid membrane. It catalyses the reaction a plastoquinone + NADH + (n+1) H(+)(in) = a plastoquinol + NAD(+) + n H(+)(out). The catalysed reaction is a plastoquinone + NADPH + (n+1) H(+)(in) = a plastoquinol + NADP(+) + n H(+)(out). Functionally, NDH-1 shuttles electrons from an unknown electron donor, via FMN and iron-sulfur (Fe-S) centers, to quinones in the respiratory and/or the photosynthetic chain. The immediate electron acceptor for the enzyme in this species is believed to be plastoquinone. Couples the redox reaction to proton translocation, and thus conserves the redox energy in a proton gradient. This Prochlorococcus marinus (strain NATL2A) protein is NAD(P)H-quinone oxidoreductase subunit I.